A 313-amino-acid polypeptide reads, in one-letter code: Putative phosphoribosylaminoimidazole-succinocarboxamide synthase 2 (313 aa).

Belongs to the SAICAR synthetase family.

It catalyses the reaction 5-amino-1-(5-phospho-D-ribosyl)imidazole-4-carboxylate + L-aspartate + ATP = (2S)-2-[5-amino-1-(5-phospho-beta-D-ribosyl)imidazole-4-carboxamido]succinate + ADP + phosphate + 2 H(+). Its pathway is purine metabolism; IMP biosynthesis via de novo pathway; 5-amino-1-(5-phospho-D-ribosyl)imidazole-4-carboxamide from 5-amino-1-(5-phospho-D-ribosyl)imidazole-4-carboxylate: step 1/2. This is Putative phosphoribosylaminoimidazole-succinocarboxamide synthase 2 (purC2) from Mesorhizobium japonicum (strain LMG 29417 / CECT 9101 / MAFF 303099) (Mesorhizobium loti (strain MAFF 303099)).